The chain runs to 353 residues: Methylthioribose-1-phosphate isomerase (353 aa).

Substrate is bound by residues 48-50, Arg-94, and Gln-201; that span reads RGA. Catalysis depends on Asp-242, which acts as the Proton donor. A substrate-binding site is contributed by 252 to 253; that stretch reads NK.

Belongs to the eIF-2B alpha/beta/delta subunits family. MtnA subfamily.

The catalysed reaction is 5-(methylsulfanyl)-alpha-D-ribose 1-phosphate = 5-(methylsulfanyl)-D-ribulose 1-phosphate. Its pathway is amino-acid biosynthesis; L-methionine biosynthesis via salvage pathway; L-methionine from S-methyl-5-thio-alpha-D-ribose 1-phosphate: step 1/6. Its function is as follows. Catalyzes the interconversion of methylthioribose-1-phosphate (MTR-1-P) into methylthioribulose-1-phosphate (MTRu-1-P). In Roseiflexus sp. (strain RS-1), this protein is Methylthioribose-1-phosphate isomerase.